We begin with the raw amino-acid sequence, 419 residues long: Subtilisin-like protease 2 (419 aa).

A signal peptide spans 1–16; sequence MQLLNFGLLLLPFVAG. Residues 17 to 122 constitute a propeptide that is removed on maturation; that stretch reads DLAPQPEPLL…VHPDQHVYLA (106 aa). The region spanning 36 to 122 is the Inhibitor I9 domain; that stretch reads QYIVTLKEGL…VHPDQHVYLA (87 aa). A Peptidase S8 domain is found at 131–419; that stretch reads RWGLGYMSSK…IQERKFKLPK (289 aa). Catalysis depends on charge relay system residues Asp-169 and His-201. N-linked (GlcNAc...) asparagine glycans are attached at residues Asn-248, Asn-261, and Asn-348. Ser-357 (charge relay system) is an active-site residue. Asn-388 is a glycosylation site (N-linked (GlcNAc...) asparagine).

It belongs to the peptidase S8 family.

The protein localises to the secreted. Its function is as follows. Secreted subtilisin-like serine protease with keratinolytic activity that contributes to pathogenicity. This is Subtilisin-like protease 2 (SUB2) from Trichophyton verrucosum (Cattle ringworm fungus).